Here is a 530-residue protein sequence, read N- to C-terminus: MSAKEKFTSLSPAEFFKRNPELAGFPNPARALYQTVRELIENSLDATDVHGILPNIKITIDLIDEARQIYKVNVVDNGIGIPPQEVPNAFGRVLYSSKYVNRQTRGMYGLGVKAAVLYSQMHQDKPIEIETSPANSKRIYTFKLKIDINKNEPIIVERGSVENTRGFHGTSVAISIPGDWPKAKSRIYEYIKRTYIITPYAEFIFKDPEGNVTYYPRLTNKIPKPPQEVKPHPYGVDREEIKILINNLKRDYTIKEFLVNEFQSIGDTTADKILELAGLKPNKKVKNLTEEEITRLVETFKKYEDFRSPSADSLSVIGEDLIELGLKKIFNPDFAASITRKPKAYQGHPFIVEAGVAFGGSIPVGEEPIVLRYANKIPLIYDEKSDVIWKVVEELDWKRYGIESDQYQMVVMVHLCSTKIPYKSAGKESIAEVEDIEKEIKNALMEVARKLKQYLSEKRKEQEAKKKLLAYLKYIPEVSRSLATFLASGNKELVSKYQNEISEGLFKLISKKLDLINIEEYRKVYRVDSE.

Residues Asn42, Asp76, Ser97 to Lys98, Gly106 to Lys113, and Lys427 each bind ATP.

This sequence belongs to the TOP6B family. As to quaternary structure, homodimer. Heterotetramer of two Top6A and two Top6B chains.

The catalysed reaction is ATP-dependent breakage, passage and rejoining of double-stranded DNA.. Its function is as follows. Relaxes both positive and negative superturns and exhibits a strong decatenase activity. The polypeptide is Type 2 DNA topoisomerase 6 subunit B (Saccharolobus islandicus (strain M.16.4 / Kamchatka #3) (Sulfolobus islandicus)).